Consider the following 213-residue polypeptide: Large ribosomal subunit protein uL3 (213 aa).

It belongs to the universal ribosomal protein uL3 family. As to quaternary structure, part of the 50S ribosomal subunit. Forms a cluster with proteins L14 and L19.

Its function is as follows. One of the primary rRNA binding proteins, it binds directly near the 3'-end of the 23S rRNA, where it nucleates assembly of the 50S subunit. The protein is Large ribosomal subunit protein uL3 of Bifidobacterium longum (strain DJO10A).